Reading from the N-terminus, the 238-residue chain is 1-(5-phosphoribosyl)-5-[(5-phosphoribosylamino)methylideneamino] imidazole-4-carboxamide isomerase (238 aa).

Aspartate 8 serves as the catalytic Proton acceptor. Residue aspartate 129 is the Proton donor of the active site.

It belongs to the HisA/HisF family.

It is found in the cytoplasm. The catalysed reaction is 1-(5-phospho-beta-D-ribosyl)-5-[(5-phospho-beta-D-ribosylamino)methylideneamino]imidazole-4-carboxamide = 5-[(5-phospho-1-deoxy-D-ribulos-1-ylimino)methylamino]-1-(5-phospho-beta-D-ribosyl)imidazole-4-carboxamide. Its pathway is amino-acid biosynthesis; L-histidine biosynthesis; L-histidine from 5-phospho-alpha-D-ribose 1-diphosphate: step 4/9. The protein is 1-(5-phosphoribosyl)-5-[(5-phosphoribosylamino)methylideneamino] imidazole-4-carboxamide isomerase of Jannaschia sp. (strain CCS1).